The primary structure comprises 175 residues: B9 domain-containing protein 2 (175 aa).

Residues 2-118 enclose the C2 B9-type domain; it reads AELHIIGQII…QCVTWRPLGS (117 aa).

It belongs to the B9D family. In terms of assembly, part of the tectonic-like complex (also named B9 complex).

Its subcellular location is the cytoplasm. The protein localises to the cytoskeleton. It is found in the cilium basal body. The protein resides in the cilium axoneme. Its function is as follows. Component of the tectonic-like complex, a complex localized at the transition zone of primary cilia and acting as a barrier that prevents diffusion of transmembrane proteins between the cilia and plasma membranes. This Danio rerio (Zebrafish) protein is B9 domain-containing protein 2 (b9d2).